Here is a 1449-residue protein sequence, read N- to C-terminus: VWFA and cache domain-containing protein CG16868 (1449 aa).

The N-terminal stretch at Met1–Ser23 is a signal peptide. Over Gln24–Ser1220 the chain is Extracellular. 6 N-linked (GlcNAc...) asparagine glycosylation sites follow: Asn32, Asn112, Asn153, Asn407, Asn447, and Asn497. A VWFA domain is found at Phe320–Ile541. In terms of domain architecture, Cache 1 spans Val557–Ser639. Residues Asn649, Asn668, and Asn707 are each glycosylated (N-linked (GlcNAc...) asparagine). The region spanning Thr889 to Tyr934 is the Cache 2 domain. Residues Asn1015, Asn1025, Asn1059, and Asn1111 are each glycosylated (N-linked (GlcNAc...) asparagine). Residues Ala1221–Tyr1241 traverse the membrane as a helical segment. Over Cys1242–Ser1449 the chain is Cytoplasmic. Disordered stretches follow at residues Tyr1307–Gln1339 and Asp1352–Val1416. Over residues Asp1359–Ser1369 the composition is skewed to low complexity. Over residues Pro1370–Ser1392 the composition is skewed to polar residues.

It belongs to the calcium channel subunit alpha-2/delta family.

It is found in the membrane. The chain is VWFA and cache domain-containing protein CG16868 from Drosophila melanogaster (Fruit fly).